The following is a 432-amino-acid chain: Asparagine--tRNA ligase (432 aa).

It belongs to the class-II aminoacyl-tRNA synthetase family. As to quaternary structure, homodimer.

The protein resides in the cytoplasm. The catalysed reaction is tRNA(Asn) + L-asparagine + ATP = L-asparaginyl-tRNA(Asn) + AMP + diphosphate + H(+). This chain is Asparagine--tRNA ligase, found in Lactobacillus helveticus (strain DPC 4571).